The sequence spans 272 residues: uncharacterized protein (272 aa).

Basic and acidic residues-rich tracts occupy residues 136 to 156 and 231 to 240; these read VRREKEKETGETSESDNHIDI and GCKESRRNEP. 2 disordered regions span residues 136–157 and 174–272; these read VRREKEKETGETSESDNHIDIH and VKPK…WAAF. Positions 243–252 are enriched in polar residues; that stretch reads DLSQLKKNLP. Residues 253-272 are compositionally biased toward low complexity; it reads STAGSGSSKSTGAASGWAAF.

This is an uncharacterized protein from Arabidopsis thaliana (Mouse-ear cress).